The chain runs to 366 residues: Peroxisomal (S)-2-hydroxy-acid oxidase GLO4 (366 aa).

An FMN hydroxy acid dehydrogenase domain is found at 1-360 (MEDNLPVNVR…TRSHVMTEGD (360 aa)). A 2-oxocarboxylate is bound at residue tyrosine 27. Residues 80–82 (PTG), serine 109, 130–132 (QLY), and threonine 158 contribute to the FMN site. A 2-oxocarboxylate is bound at residue tyrosine 132. Residue arginine 167 coordinates a 2-oxocarboxylate. Positions 231 and 253 each coordinate FMN. Catalysis depends on histidine 255, which acts as the Proton acceptor. Residue arginine 258 coordinates a 2-oxocarboxylate. FMN is bound by residues 286–290 (DGGIR) and 309–310 (GR). The Microbody targeting signal signature appears at 364-366 (SLL).

Belongs to the FMN-dependent alpha-hydroxy acid dehydrogenase family. As to quaternary structure, homotetramer. Binds to CATB and CATC; these interactions are disturbed by alpha-hydroxy-2-pyridinemethanesulfonic acid (HPMS) and salicylic acid (SA). FMN serves as cofactor.

Its subcellular location is the peroxisome. The enzyme catalyses a (2S)-2-hydroxycarboxylate + O2 = a 2-oxocarboxylate + H2O2. The protein operates within lipid metabolism; fatty acid metabolism. Its function is as follows. Oxidase that catalyzes the oxidation of a broad range of 2-hydroxyacids to the corresponding 2-oxoacids, with a reduction of O2 to H2O2. May be involved in a general medium- and long-chain fatty acid catabolic pathway such as alpha-oxidation. This chain is Peroxisomal (S)-2-hydroxy-acid oxidase GLO4 (GLO4), found in Oryza sativa subsp. japonica (Rice).